A 277-amino-acid polypeptide reads, in one-letter code: Thymidylate synthase (277 aa).

Residues Arg-27 and 132 to 133 (RR) each bind dUMP. Cys-152 (nucleophile) is an active-site residue. Residues 179 to 182 (RSAD), Asn-190, and 220 to 222 (HVY) each bind dUMP. Position 182 (Asp-182) interacts with (6R)-5,10-methylene-5,6,7,8-tetrahydrofolate. Ala-276 lines the (6R)-5,10-methylene-5,6,7,8-tetrahydrofolate pocket.

The protein belongs to the thymidylate synthase family. Bacterial-type ThyA subfamily. Homodimer.

The protein resides in the cytoplasm. It catalyses the reaction dUMP + (6R)-5,10-methylene-5,6,7,8-tetrahydrofolate = 7,8-dihydrofolate + dTMP. It participates in pyrimidine metabolism; dTTP biosynthesis. Catalyzes the reductive methylation of 2'-deoxyuridine-5'-monophosphate (dUMP) to 2'-deoxythymidine-5'-monophosphate (dTMP) while utilizing 5,10-methylenetetrahydrofolate (mTHF) as the methyl donor and reductant in the reaction, yielding dihydrofolate (DHF) as a by-product. This enzymatic reaction provides an intracellular de novo source of dTMP, an essential precursor for DNA biosynthesis. The chain is Thymidylate synthase from Albidiferax ferrireducens (strain ATCC BAA-621 / DSM 15236 / T118) (Rhodoferax ferrireducens).